Here is a 244-residue protein sequence, read N- to C-terminus: 2-C-methyl-D-erythritol 4-phosphate cytidylyltransferase (244 aa).

This sequence belongs to the IspD/TarI cytidylyltransferase family. IspD subfamily.

It catalyses the reaction 2-C-methyl-D-erythritol 4-phosphate + CTP + H(+) = 4-CDP-2-C-methyl-D-erythritol + diphosphate. Its pathway is isoprenoid biosynthesis; isopentenyl diphosphate biosynthesis via DXP pathway; isopentenyl diphosphate from 1-deoxy-D-xylulose 5-phosphate: step 2/6. In terms of biological role, catalyzes the formation of 4-diphosphocytidyl-2-C-methyl-D-erythritol from CTP and 2-C-methyl-D-erythritol 4-phosphate (MEP). This is 2-C-methyl-D-erythritol 4-phosphate cytidylyltransferase from Solibacter usitatus (strain Ellin6076).